We begin with the raw amino-acid sequence, 464 residues long: Cytoplasmic tRNA 2-thiolation protein 2 (464 aa).

Belongs to the CTU2/NCS2 family.

Its subcellular location is the cytoplasm. The protein operates within tRNA modification; 5-methoxycarbonylmethyl-2-thiouridine-tRNA biosynthesis. Its function is as follows. Plays a central role in 2-thiolation of mcm(5)S(2)U at tRNA wobble positions of tRNA(Lys), tRNA(Glu) and tRNA(Gln). May act by forming a heterodimer with NCS6/CTU1 that ligates sulfur from thiocarboxylated URM1 onto the uridine of tRNAs at wobble position. The sequence is that of Cytoplasmic tRNA 2-thiolation protein 2 from Oryza sativa subsp. japonica (Rice).